The following is a 43-amino-acid chain: Protein PsbN (43 aa).

Residues 5 to 27 form a helical membrane-spanning segment; it reads TLVAISISCLLVSFTGYALYTAF.

Belongs to the PsbN family.

The protein localises to the plastid. Its subcellular location is the chloroplast thylakoid membrane. Functionally, may play a role in photosystem I and II biogenesis. This chain is Protein PsbN, found in Cryptomeria japonica (Japanese cedar).